Reading from the N-terminus, the 422-residue chain is Enolase 2 (422 aa).

Gln-162 is a (2R)-2-phosphoglycerate binding site. Glu-204 serves as the catalytic Proton donor. Mg(2+) is bound by residues Asp-241, Glu-285, and Asp-312. 4 residues coordinate (2R)-2-phosphoglycerate: Lys-337, Arg-366, Ser-367, and Lys-388. Lys-337 functions as the Proton acceptor in the catalytic mechanism.

This sequence belongs to the enolase family. The cofactor is Mg(2+).

It is found in the cytoplasm. The protein localises to the secreted. It localises to the cell surface. It carries out the reaction (2R)-2-phosphoglycerate = phosphoenolpyruvate + H2O. It participates in carbohydrate degradation; glycolysis; pyruvate from D-glyceraldehyde 3-phosphate: step 4/5. Catalyzes the reversible conversion of 2-phosphoglycerate (2-PG) into phosphoenolpyruvate (PEP). It is essential for the degradation of carbohydrates via glycolysis. In Lactococcus lactis subsp. lactis (strain IL1403) (Streptococcus lactis), this protein is Enolase 2.